Here is a 231-residue protein sequence, read N- to C-terminus: Ribose-5-phosphate isomerase A (231 aa).

Substrate-binding positions include 40–43 (TGST), 93–96 (DGAD), and 106–109 (KGGG). Catalysis depends on glutamate 115, which acts as the Proton acceptor. Lysine 133 provides a ligand contact to substrate.

It belongs to the ribose 5-phosphate isomerase family. In terms of assembly, homodimer.

The catalysed reaction is aldehydo-D-ribose 5-phosphate = D-ribulose 5-phosphate. It functions in the pathway carbohydrate degradation; pentose phosphate pathway; D-ribose 5-phosphate from D-ribulose 5-phosphate (non-oxidative stage): step 1/1. Catalyzes the reversible conversion of ribose-5-phosphate to ribulose 5-phosphate. In Escherichia coli O6:K15:H31 (strain 536 / UPEC), this protein is Ribose-5-phosphate isomerase A.